Here is a 363-residue protein sequence, read N- to C-terminus: Ethanolamine kinase 1 (363 aa).

Belongs to the choline/ethanolamine kinase family.

Its subcellular location is the cytoplasm. The enzyme catalyses ethanolamine + ATP = phosphoethanolamine + ADP + H(+). It participates in phospholipid metabolism; phosphatidylethanolamine biosynthesis; phosphatidylethanolamine from ethanolamine: step 1/3. In terms of biological role, highly specific for ethanolamine phosphorylation. May be a rate-controlling step in phosphatidylethanolamine biosynthesis. The sequence is that of Ethanolamine kinase 1 (Etnk1) from Mus musculus (Mouse).